A 156-amino-acid chain; its full sequence is uncharacterized protein (156 aa).

Helical transmembrane passes span 6–26 (LIVL…PYFA), 34–54 (FWKF…HQMP), 68–88 (CARC…YPFI), 100–120 (WYLI…LIGL), and 129–149 (FITG…IFFE).

Its subcellular location is the cell membrane. This is an uncharacterized protein from Methanocaldococcus jannaschii (strain ATCC 43067 / DSM 2661 / JAL-1 / JCM 10045 / NBRC 100440) (Methanococcus jannaschii).